Consider the following 382-residue polypeptide: Kelch domain-containing protein 3 (382 aa).

5 Kelch repeats span residues 25–77 (RVYS…PYMR), 88–138 (TVFL…VLGK), 139–189 (IMYI…TMLG), 191–249 (HMYV…GYNG), and 251–301 (LYIF…IVGD).

As to quaternary structure, component of a CRL2(KLHDC3) complex, also named ECS(KLHDC3) complex, composed of CUL2, Elongin BC (ELOB and ELOC), RBX1 and substrate-specific adapter KLHDC3. May form oligomers as a KLHDC3-ELOB-ELOC complex; this interaction is likely autoinhibitory for the E3 ligase complex. Expressed specifically in testis, particularly in pachytene spermatocytes.

The protein resides in the cytoplasm. Its pathway is protein modification; protein ubiquitination. In terms of biological role, substrate-recognition component of a Cul2-RING (CRL2) E3 ubiquitin-protein ligase complex of the DesCEND (destruction via C-end degrons) pathway, which recognizes a C-degron located at the extreme C terminus of target proteins, leading to their ubiquitination and degradation. The C-degron recognized by the DesCEND pathway is usually a motif of less than ten residues and can be present in full-length proteins, truncated proteins or proteolytically cleaved forms. The CRL2(KLHDC3) complex specifically recognizes proteins with a glycine (Gly) at the C-terminus, leading to their ubiquitination and degradation: recognizes the C-terminal -Arg-(Xaa)n-Arg-Gly, -Arg-(Xaa)n-Lys-Gly, and -Arg-(Xaa)n-Gln-Gly degrons. The CRL2(KLHDC3) complex mediates ubiquitination and degradation of truncated SELENOV and SEPHS2 selenoproteins produced by failed UGA/Sec decoding, which end with a glycine. May be involved in meiotic recombination process. The sequence is that of Kelch domain-containing protein 3 from Mus musculus (Mouse).